The chain runs to 1354 residues: Rho-associated protein kinase 1 (1354 aa).

Ser2 bears the N-acetylserine mark. One can recognise a Protein kinase domain in the interval 76 to 338 (YEVVKVIGRG…VEEIKRHLFF (263 aa)). ATP contacts are provided by residues 82–90 (IGRGAFGEV) and Lys105. Asp198 (proton acceptor) is an active-site residue. The AGC-kinase C-terminal domain maps to 341–409 (DQWAWETLRD…YSNRRYLSPA (69 aa)). The segment at 368–727 (FDDLEEDKGD…KKLKEEREAR (360 aa)) is interaction with FHOD1. Residues 422–692 (KSLQENLQKT…RLEQEVNEHK (271 aa)) are a coiled coil. Residues 479-556 (STVSQIEKEK…LEEANDLLRT (78 aa)) form the REM-1 domain. The tract at residues 707–946 (EAKSVAMCEM…AVSRLEETNS (240 aa)) is SHROOM3 binding. Residues 949–1015 (TKDIELLRKE…LAEIMNRKDF (67 aa)) form the RhoBD domain. The segment at 998–1010 (LKTQAVNKLAEIM) is RHOA binding. Residues 1011–1102 (NRKDFKIDKK…KLSDLSDSTS (92 aa)) adopt a coiled-coil conformation. Positions 1101–1120 (TSVASFPSADETDPNLPESR) are disordered. 2 positions are modified to phosphoserine: Ser1105 and Ser1108. The interval 1115 to 1354 (NLPESRIEGW…VVKNTSGKTS (240 aa)) is auto-inhibitory. In terms of domain architecture, PH spans 1118 to 1317 (ESRIEGWLSV…WVTHLVKKIP (200 aa)). Residues 1228–1283 (GHEFIPTLYHFPANCEACAKPLWHVFKPPPALECRRCHVKCHRDHLDKKEDLISPC) form a Phorbol-ester/DAG-type zinc finger. Ser1328 carries the post-translational modification Phosphoserine. Residues 1333-1354 (STRSTANQSFRKVVKNTSGKTS) form a disordered region.

The protein belongs to the protein kinase superfamily. AGC Ser/Thr protein kinase family. As to quaternary structure, homodimer. Interacts with RHOA (activated by GTP), RHOB, RHOC, GEM, MYLC2B, RHOE, PPP1R12A, LIMK1, LIMK2, TSG101, CHORDC1, DAPK3, PFN1, PTEN and JIP3. Interacts with FHOD1 in a Src-dependent manner. Interacts with ITGB1BP1 (via N-terminus and PTB domain). Interacts with SHROOM3. Mg(2+) is required as a cofactor. Post-translationally, autophosphorylated on serine and threonine residues. In terms of processing, cleaved by caspase-3 during apoptosis. This leads to constitutive activation of the kinase and membrane blebbing. As to expression, detected in corneal epithelium.

It localises to the cytoplasm. Its subcellular location is the cytoskeleton. The protein localises to the microtubule organizing center. It is found in the centrosome. The protein resides in the centriole. It localises to the golgi apparatus membrane. Its subcellular location is the cell projection. The protein localises to the bleb. It is found in the cell membrane. The protein resides in the lamellipodium. It localises to the ruffle. It catalyses the reaction L-seryl-[protein] + ATP = O-phospho-L-seryl-[protein] + ADP + H(+). It carries out the reaction L-threonyl-[protein] + ATP = O-phospho-L-threonyl-[protein] + ADP + H(+). Its activity is regulated as follows. Activated by RHOA binding. Inhibited by Y-27632. Functionally, protein kinase which is a key regulator of the actin cytoskeleton and cell polarity. Involved in regulation of smooth muscle contraction, actin cytoskeleton organization, stress fiber and focal adhesion formation, neurite retraction, cell adhesion and motility via phosphorylation of DAPK3, GFAP, LIMK1, LIMK2, MYL9/MLC2, TPPP, PFN1 and PPP1R12A. Phosphorylates FHOD1 and acts synergistically with it to promote SRC-dependent non-apoptotic plasma membrane blebbing. Phosphorylates JIP3 and regulates the recruitment of JNK to JIP3 upon UVB-induced stress. Acts as a suppressor of inflammatory cell migration by regulating PTEN phosphorylation and stability. Acts as a negative regulator of VEGF-induced angiogenic endothelial cell activation. Required for centrosome positioning and centrosome-dependent exit from mitosis. Plays a role in terminal erythroid differentiation. Inhibits podocyte motility via regulation of actin cytoskeletal dynamics and phosphorylation of CFL1. Promotes keratinocyte terminal differentiation. Involved in osteoblast compaction through the fibronectin fibrillogenesis cell-mediated matrix assembly process, essential for osteoblast mineralization. May regulate closure of the eyelids and ventral body wall by inducing the assembly of actomyosin bundles. This chain is Rho-associated protein kinase 1 (ROCK1), found in Oryctolagus cuniculus (Rabbit).